The chain runs to 346 residues: Heat-inducible transcription repressor HrcA (346 aa).

The protein belongs to the HrcA family.

Negative regulator of class I heat shock genes (grpE-dnaK-dnaJ and groELS operons). Prevents heat-shock induction of these operons. The polypeptide is Heat-inducible transcription repressor HrcA (Pediococcus pentosaceus (strain ATCC 25745 / CCUG 21536 / LMG 10740 / 183-1w)).